The chain runs to 132 residues: Ribosome-binding factor A (132 aa).

The protein belongs to the RbfA family. Monomer. Binds 30S ribosomal subunits, but not 50S ribosomal subunits or 70S ribosomes.

It is found in the cytoplasm. One of several proteins that assist in the late maturation steps of the functional core of the 30S ribosomal subunit. Associates with free 30S ribosomal subunits (but not with 30S subunits that are part of 70S ribosomes or polysomes). Required for efficient processing of 16S rRNA. May interact with the 5'-terminal helix region of 16S rRNA. In Pseudomonas putida (strain ATCC 700007 / DSM 6899 / JCM 31910 / BCRC 17059 / LMG 24140 / F1), this protein is Ribosome-binding factor A.